The sequence spans 468 residues: Protein C-ets-2 (468 aa).

In terms of domain architecture, PNT spans 85 to 170 (ATFSGFQKEQ…EHLEQMIKEN (86 aa)). Phosphoserine is present on residues Ser220 and Ser225. Residues 262 to 290 (VNLLNNNSGKPKDHDSPENGGDSFESSDS) are disordered. A phosphoserine mark is found at Ser294, Ser297, and Ser300. Positions 362–442 (IQLWQFLLEL…SGKRYVYRFV (81 aa)) form a DNA-binding region, ETS.

It belongs to the ETS family. Phosphorylation by CDK10 at Ser-220 and Ser-225 creates a phosphodegron that targets ETS2 for proteasomal degradation.

It localises to the nucleus. Transcription factor activating transcription. Binds specifically the GGA DNA motif in gene promoters and stimulates transcription of those genes. The sequence is that of Protein C-ets-2 (Ets2) from Mus musculus (Mouse).